Here is a 347-residue protein sequence, read N- to C-terminus: Glycerol-1-phosphate dehydrogenase [NAD(P)+] (347 aa).

NAD(+) contacts are provided by residues 90 to 94 (GRPVD) and 112 to 115 (TAIS). Asp117 contacts substrate. Ser121 is a binding site for NAD(+). Residue Asp165 participates in substrate binding. Residues Asp165 and His245 each contribute to the Zn(2+) site. His249 is a substrate binding site. His262 contributes to the Zn(2+) binding site.

This sequence belongs to the glycerol-1-phosphate dehydrogenase family. As to quaternary structure, homodimer. Zn(2+) is required as a cofactor.

It localises to the cytoplasm. It carries out the reaction sn-glycerol 1-phosphate + NAD(+) = dihydroxyacetone phosphate + NADH + H(+). The catalysed reaction is sn-glycerol 1-phosphate + NADP(+) = dihydroxyacetone phosphate + NADPH + H(+). Its pathway is membrane lipid metabolism; glycerophospholipid metabolism. In terms of biological role, catalyzes the NAD(P)H-dependent reduction of dihydroxyacetonephosphate (DHAP or glycerone phosphate) to glycerol 1-phosphate (G1P). The G1P thus generated is used as the glycerophosphate backbone of phospholipids in the cellular membranes of Archaea. This chain is Glycerol-1-phosphate dehydrogenase [NAD(P)+], found in Thermofilum pendens (strain DSM 2475 / Hrk 5).